The primary structure comprises 131 residues: Cytochrome b5 (131 aa).

The Cytochrome b5 heme-binding domain occupies 3–79 (AKIFSLDEVS…LEEYLIGSLD (77 aa)). 2 residues coordinate heme: His-38 and His-62. Residues 108-125 (IILPALAIIGALVYKYVI) form a helical membrane-spanning segment.

Belongs to the cytochrome b5 family.

The protein resides in the endoplasmic reticulum membrane. It is found in the microsome membrane. In terms of biological role, membrane bound hemoprotein which function as an electron carrier for several membrane bound oxygenases. The chain is Cytochrome b5 from Rhizopus stolonifer (Rhizopus nigricans).